Reading from the N-terminus, the 436-residue chain is Protein translocase subunit SecY (436 aa).

Transmembrane regions (helical) follow at residues I18–G38, L69–V89, Y116–T138, I154–F174, M187–V207, V214–E234, M266–I286, P314–I334, V375–I395, and G396–L416.

Belongs to the SecY/SEC61-alpha family. In terms of assembly, component of the Sec protein translocase complex. Heterotrimer consisting of SecY, SecE and SecG subunits. The heterotrimers can form oligomers, although 1 heterotrimer is thought to be able to translocate proteins. Interacts with the ribosome. Interacts with SecDF, and other proteins may be involved. Interacts with SecA.

It localises to the cell membrane. The central subunit of the protein translocation channel SecYEG. Consists of two halves formed by TMs 1-5 and 6-10. These two domains form a lateral gate at the front which open onto the bilayer between TMs 2 and 7, and are clamped together by SecE at the back. The channel is closed by both a pore ring composed of hydrophobic SecY resides and a short helix (helix 2A) on the extracellular side of the membrane which forms a plug. The plug probably moves laterally to allow the channel to open. The ring and the pore may move independently. The chain is Protein translocase subunit SecY from Micrococcus luteus (Micrococcus lysodeikticus).